The following is a 126-amino-acid chain: MNIIEQLEQEEIARLGKTVPDFAPGDTVVVQVKVKEGNRERLQAYEGVVIAKRNRGLNSAFTVRKISAGEGVERTFQTYSPLVASVEVKRRGDVRRAKLYYLRERSGKSARIKEKLPARKASVAAE.

The protein belongs to the bacterial ribosomal protein bL19 family.

Its function is as follows. This protein is located at the 30S-50S ribosomal subunit interface and may play a role in the structure and function of the aminoacyl-tRNA binding site. The chain is Large ribosomal subunit protein bL19 from Thiobacillus denitrificans (strain ATCC 25259 / T1).